The following is a 1907-amino-acid chain: MAPTWRPSVVSVVGPVGLFLVLLARGCLAEEPPRFIREPKDQIGVSGGVASFVCQATGDPKPRVTWNKKGKKVNSQRFETIDFDESSGAVLRIQPLRTPRDENVYECVAQNSVGEITVHAKLTVLREDQLPPGFPNIDMGPQLKVVERTRTATMLCAASGNPDPEITWFKDFLPVDPSASNGRIKQLRSGALQIESSEETDQGKYECVATNSAGVRYSSPANLYVRVRRVAPRFSILPMSHEIMPGGNVNITCVAVGSPMPYVKWMQGAEDLTPEDDMPVGRNVLELTDVKDSANYTCVAMSSLGVIEAVAQITVKSLPKAPGTPVVTENTATSITVTWDSGNPDPVSYYVIEYKSKSQDGPYQIKEDITTTRYSIGGLSPNSEYEIWVSAVNSIGQGPPSESVVTRTGEQAPASAPRNVQARMLSATTMIVQWEEPVEPNGLIRGYRVYYTMEPEHPVGNWQKHNVDDSLLTTVGSLLEDETYTVRVLAFTSVGDGPLSDPIQVKTQQGVPGQPMNLRAEAKSETSIGLSWSAPRQESVIKYELLFREGDRGREVGRTFDPTTAFVVEDLKPNTEYAFRLAARSPQGLGAFTAVVRQRTLQAKPSAPPQDVKCTSLRSTAILVSWRPPPPETHNGALVGYSVRYRPLGSEDPDPKEVNNIPPTTTQILLEALEKWTEYRVTAVAYTEVGPGPESSPVVVRTDEDVPSAPPRKVEAEALNATAIRVLWRSPTPGRQHGQIRGYQVHYVRMEGAEARGPPRIKDIMLADAQEMVITNLQPETAYSITVAAYTMKGDGARSKPKVVVTKGAVLGRPTLSVQQTPEGSLLARWEPPADAAEDPVLGYRLQFGREDAAPATLELAAWERRFAAPAHKGATYVFRLAARGRAGLGEEASAALSIPEDAPRGFPQILGAAGNVSAGSVILRWLPPVPAERNGAIIKYTVSVREAGAPGPATETELAAAAQPGAETALTLQGLRPETAYELRVRAHTRRGPGPFSPPLRYRLARDPVSPKNFKVKMIMKTSVLLSWEFPDNYNSPTPYKIQYNGLTLDVDGRTTKKLITHLKPHTFYNFVLTNRGSSLGGLQQTVTARTAFNMLSGKPSVAPKPDNDGSIVVYLPDGQSPVTVQNYFIVMVPLRKSRGGQFPILLGSPEDMDLEELIQDLSRLQRRSLRHSRQLEVPRPYIAARFSILPAVFHPGNQKQYGGFDNRGLEPGHRYVLFVLAVLQKNEPTFAASPFSDPFQLDNPDPQPIVDGEEGLIWVIGPVLAVVFIICIVIAILLYKNKPDSKRKDSEPRTKCLLNNADLAPHHPKDPVEMRRINFQTPGMLSHPPIPITDMAEHMERLKANDSLKLSQEYESIDPGQQFTWEHSNLEANKPKNRYANVIAYDHSRVILQPLEGIMGSDYINANYVDGYRRQNAYIATQGPLPETFGDFWRMVWEQRSATVVMMTRLEEKSRVKCDQYWPNRGTETYGFIQVTLLDTMELATFCVRTFSLHKNGSSEKREVRHFQFTAWPDHGVPEYPTPFLAFLRRVKTCNPPDAGPVVVHCSAGVGRTGCFIVIDAMLERIRTEKTVDVYGHVTLMRSQRNYMVQTEDQYSFIHEALLEAVGCGNTEVPARSLYTYIQKLAQVEPGEHVTGMELEFKRLASSKAHTSRFITASLPCNKFKNRLVNILPYESSRVCLQPIRGVEGSDYINASFIDGYRQQKAYIATQGPLAETTEDFWRALWENNSTIVVMLTKLREMGREKCHQYWPAERSARYQYFVVDPMAEYNMPQYILREFKVTDARDGQSRTVRQFQFTDWPEQGAPKSGEGFIDFIGQVHKTKEQFGQDGPISVHCSAGVGRTGVFITLSIVLERMRYEGVVDIFQTVKVLRTQRPAMVQTEDEYQFCFQAALEYLGSFDHYAT.

A signal peptide spans 1 to 29 (MAPTWRPSVVSVVGPVGLFLVLLARGCLA). The Extracellular segment spans residues 30–1257 (EEPPRFIREP…PQPIVDGEEG (1228 aa)). Ig-like C2-type domains lie at 33–123 (PRFI…AKLT), 135–224 (PNID…ANLY), and 232–314 (PRFS…AQIT). Cystine bridges form between Cys54-Cys107 and Cys156-Cys207. An important for binding to glycosaminoglycan chains region spans residues 68-72 (KKGKK). 2 N-linked (GlcNAc...) asparagine glycosylation sites follow: Asn250 and Asn295. A disulfide bridge links Cys253 with Cys298. Fibronectin type-III domains follow at residues 321 to 411 (APGT…TGEQ), 416 to 510 (APRN…TQQG), 514 to 603 (QPMN…TLQA), 608 to 705 (PPQD…TDED), 710 to 809 (PPRK…TKGA), 810 to 906 (VLGR…APRG), 907 to 1008 (FPQI…LARD), and 1011 to 1095 (SPKN…TAFN). The span at 691-700 (PGPESSPVVV) shows a compositional bias: low complexity. The segment at 691–711 (PGPESSPVVVRTDEDVPSAPP) is disordered. A glycan (N-linked (GlcNAc...) asparagine) is linked at Asn720. Asn916 carries N-linked (GlcNAc...) asparagine glycosylation. Residues 1258–1278 (LIWVIGPVLAVVFIICIVIAI) form a helical membrane-spanning segment. At 1279–1907 (LLYKNKPDSK…YLGSFDHYAT (629 aa)) the chain is on the cytoplasmic side. Basic and acidic residues predominate over residues 1286–1296 (DSKRKDSEPRT). A disordered region spans residues 1286 to 1313 (DSKRKDSEPRTKCLLNNADLAPHHPKDP). Tyrosine-protein phosphatase domains lie at 1352–1607 (LSQE…LLEA) and 1639–1898 (MELE…ALEY). Substrate contacts are provided by residues Asp1516, 1548–1554 (CSAGVGR), and Gln1592. The active-site Phosphocysteine intermediate is the Cys1548. Cys1839 (phosphocysteine intermediate) is an active-site residue.

Belongs to the protein-tyrosine phosphatase family. Receptor class 2A subfamily. As to quaternary structure, binding to large heparan sulfate proteoglycan structures promotes oligomerization. Binding to chondroitin sulfate proteoglycan does not lead to oligomerization. Interacts (via Ig-like domains) with NTRK1 and NTRK3, but does not form detectable complexes with NTRK2. Interacts with PPFIA1, PPFIA2 and PPFIA3. Post-translationally, a cleavage occurs, separating the extracellular domain from the transmembrane segment. This process called 'ectodomain shedding' is thought to be involved in receptor desensitization, signal transduction and/or membrane localization. In terms of tissue distribution, detected in brain neocortex (at protein level). Detected in heart, testis and liver. Detected at lower levels in skeletal muscle, brain, spleen and kidney.

It localises to the cell membrane. Its subcellular location is the cell projection. The protein localises to the axon. The protein resides in the perikaryon. It is found in the cytoplasmic vesicle. It localises to the secretory vesicle. Its subcellular location is the synaptic vesicle membrane. The protein localises to the synapse. The protein resides in the synaptosome. It is found in the postsynaptic density. It localises to the neuron projection. Its subcellular location is the growth cone. The enzyme catalyses O-phospho-L-tyrosyl-[protein] + H2O = L-tyrosyl-[protein] + phosphate. In terms of biological role, cell surface receptor that binds to glycosaminoglycans, including chondroitin sulfate proteoglycans and heparan sulfate proteoglycans. Binding to chondroitin sulfate and heparan sulfate proteoglycans has opposite effects on PTPRS oligomerization and regulation of neurite outgrowth. Contributes to the inhibition of neurite and axonal outgrowth by chondroitin sulfate proteoglycans, also after nerve transection. Plays a role in stimulating neurite outgrowth in response to the heparan sulfate proteoglycan GPC2. Required for normal brain development, especially for normal development of the pituitary gland and the olfactory bulb. Functions as tyrosine phosphatase. Mediates dephosphorylation of NTRK1, NTRK2 and NTRK3. Plays a role in down-regulation of signaling cascades that lead to the activation of Akt and MAP kinases. Down-regulates TLR9-mediated activation of NF-kappa-B, as well as production of TNF, interferon alpha and interferon beta. This is Receptor-type tyrosine-protein phosphatase S (Ptprs) from Rattus norvegicus (Rat).